We begin with the raw amino-acid sequence, 161 residues long: Globin CTT-VIIB-5/CTT-VIIB-9 (161 aa).

The signal sequence occupies residues 1–16 (MKFFAVLALCIVGAIA). The region spanning 18-161 (PLTADEASLV…NTFAIVVPRL (144 aa)) is the Globin domain. Heme b is bound by residues histidine 76 and histidine 111.

This sequence belongs to the globin family. As to quaternary structure, homodimer.

The sequence is that of Globin CTT-VIIB-5/CTT-VIIB-9 (CTT-7B5) from Chironomus thummi thummi (Midge).